The sequence spans 202 residues: 3-isopropylmalate dehydratase small subunit (202 aa).

The protein belongs to the LeuD family. LeuD type 1 subfamily. Heterodimer of LeuC and LeuD.

It carries out the reaction (2R,3S)-3-isopropylmalate = (2S)-2-isopropylmalate. The protein operates within amino-acid biosynthesis; L-leucine biosynthesis; L-leucine from 3-methyl-2-oxobutanoate: step 2/4. Catalyzes the isomerization between 2-isopropylmalate and 3-isopropylmalate, via the formation of 2-isopropylmaleate. The chain is 3-isopropylmalate dehydratase small subunit from Paenarthrobacter aurescens (strain TC1).